We begin with the raw amino-acid sequence, 244 residues long: Salivary antigen-5 (244 aa).

The N-terminal stretch at 1-23 (MAKAHSSLVFCLLALALVRFAQA) is a signal peptide. The SCP domain maps to 46–202 (LDFHNKFREL…WYTGYLVCNY (157 aa)). Residues asparagine 106 and asparagine 172 are each glycosylated (N-linked (GlcNAc...) asparagine).

This sequence belongs to the CRISP family. Venom allergen 5-like subfamily. As to expression, salivary gland (at protein level).

It localises to the secreted. Inhibits host platelet aggregation induced by low doses of collagen. The chain is Salivary antigen-5 from Triatoma infestans (Assassin bug).